The chain runs to 500 residues: Glutamate--tRNA ligase (500 aa).

The 'HIGH' region motif lies at 13 to 23 (PSPTGTPHVGM). The 'KMSKS' region motif lies at 258–262 (KLSKR). Lys261 contacts ATP.

It belongs to the class-I aminoacyl-tRNA synthetase family. Glutamate--tRNA ligase type 1 subfamily. As to quaternary structure, monomer.

It is found in the cytoplasm. The catalysed reaction is tRNA(Glu) + L-glutamate + ATP = L-glutamyl-tRNA(Glu) + AMP + diphosphate. Functionally, catalyzes the attachment of glutamate to tRNA(Glu) in a two-step reaction: glutamate is first activated by ATP to form Glu-AMP and then transferred to the acceptor end of tRNA(Glu). The sequence is that of Glutamate--tRNA ligase from Corynebacterium jeikeium (strain K411).